The chain runs to 206 residues: Large ribosomal subunit protein uL4 (206 aa).

The disordered stretch occupies residues 63–93; it reads MYKQKGTGRARHHSARAPQFRGGGKAHGPVV. The segment covering 64–77 has biased composition (basic residues); it reads YKQKGTGRARHHSA.

The protein belongs to the universal ribosomal protein uL4 family. In terms of assembly, part of the 50S ribosomal subunit.

Its function is as follows. One of the primary rRNA binding proteins, this protein initially binds near the 5'-end of the 23S rRNA. It is important during the early stages of 50S assembly. It makes multiple contacts with different domains of the 23S rRNA in the assembled 50S subunit and ribosome. In terms of biological role, forms part of the polypeptide exit tunnel. This chain is Large ribosomal subunit protein uL4, found in Sinorhizobium fredii (strain NBRC 101917 / NGR234).